We begin with the raw amino-acid sequence, 480 residues long: Glycogen synthase (480 aa).

Lys-15 is a binding site for ADP-alpha-D-glucose.

It belongs to the glycosyltransferase 1 family. Bacterial/plant glycogen synthase subfamily.

It catalyses the reaction [(1-&gt;4)-alpha-D-glucosyl](n) + ADP-alpha-D-glucose = [(1-&gt;4)-alpha-D-glucosyl](n+1) + ADP + H(+). It functions in the pathway glycan biosynthesis; glycogen biosynthesis. Its function is as follows. Synthesizes alpha-1,4-glucan chains using ADP-glucose. The polypeptide is Glycogen synthase (Rhizobium johnstonii (strain DSM 114642 / LMG 32736 / 3841) (Rhizobium leguminosarum bv. viciae)).